The chain runs to 325 residues: GMP reductase (325 aa).

Residue Cys174 is the Thioimidate intermediate of the active site. 203–226 contributes to the NADP(+) binding site; that stretch reads LIADGGIRTHGDIAKSIRFGASMV.

This sequence belongs to the IMPDH/GMPR family. GuaC type 2 subfamily.

The enzyme catalyses IMP + NH4(+) + NADP(+) = GMP + NADPH + 2 H(+). Functionally, catalyzes the irreversible NADPH-dependent deamination of GMP to IMP. It functions in the conversion of nucleobase, nucleoside and nucleotide derivatives of G to A nucleotides, and in maintaining the intracellular balance of A and G nucleotides. This Staphylococcus aureus (strain MRSA252) protein is GMP reductase.